We begin with the raw amino-acid sequence, 267 residues long: Indole-3-glycerol phosphate synthase (267 aa).

It belongs to the TrpC family.

It carries out the reaction 1-(2-carboxyphenylamino)-1-deoxy-D-ribulose 5-phosphate + H(+) = (1S,2R)-1-C-(indol-3-yl)glycerol 3-phosphate + CO2 + H2O. It functions in the pathway amino-acid biosynthesis; L-tryptophan biosynthesis; L-tryptophan from chorismate: step 4/5. This chain is Indole-3-glycerol phosphate synthase, found in Cupriavidus pinatubonensis (strain JMP 134 / LMG 1197) (Cupriavidus necator (strain JMP 134)).